A 130-amino-acid chain; its full sequence is Small ribosomal subunit protein eS17 (130 aa).

Residues 74 to 84 show a composition bias toward basic and acidic residues; the sequence is QEEERERRDNY. Positions 74–97 are disordered; it reads QEEERERRDNYMPEISTVDPSQLT.

Belongs to the eukaryotic ribosomal protein eS17 family.

This Caenorhabditis elegans protein is Small ribosomal subunit protein eS17 (rps-17).